A 60-amino-acid chain; its full sequence is Large ribosomal subunit protein uL30 (60 aa).

This sequence belongs to the universal ribosomal protein uL30 family. As to quaternary structure, part of the 50S ribosomal subunit.

This is Large ribosomal subunit protein uL30 from Dehalococcoides mccartyi (strain ATCC BAA-2100 / JCM 16839 / KCTC 5957 / BAV1).